Consider the following 444-residue polypeptide: Protein cereblon (444 aa).

Residues 1–52 (MAGEGDPEDAAHNMGNHLPLLPAEEEEEDEIEMEVEDQDNKEPKKPNIINFD) form a disordered region. Residues 23 to 37 (AEEEEEDEIEMEVED) are compositionally biased toward acidic residues. The Lon N-terminal domain maps to 80-321 (CPVIPVLPQV…CELDIMNKCT (242 aa)). A CULT domain is found at 320–428 (CTSLCCKQCQ…LTRSALLPTI (109 aa)). Residues Cys-325 and Cys-328 each coordinate Zn(2+). Positions 380, 382, and 388 each coordinate (S)-thalidomide. Residues Cys-393 and Cys-396 each coordinate Zn(2+).

This sequence belongs to the CRBN family. Component of a DCX (DDB1-CUL4-X-box) protein ligase complex, at least composed of CRBN, CUL4A, DDB1 and RBX1. Interacts directly with DDB1. Interacts with KCNT1. Interacts with ILF2. Interacts with TRAF6 and ECSIT. Post-translationally, ubiquitinated, ubiquitination is mediated by its own DCX protein ligase complex.

The protein resides in the cytoplasm. Its subcellular location is the nucleus. The protein localises to the membrane. It participates in protein modification; protein ubiquitination. In terms of biological role, substrate recognition component of a DCX (DDB1-CUL4-X-box) E3 protein ligase complex that mediates the ubiquitination and subsequent proteasomal degradation of target proteins, such as MEIS2, ILF2 or GLUL. Normal degradation of key regulatory proteins is required for normal limb outgrowth and expression of the fibroblast growth factor FGF8. Maintains presynaptic glutamate release and consequently cognitive functions, such as memory and learning, by negatively regulating large-conductance calcium-activated potassium (BK) channels in excitatory neurons. Likely to function by regulating the assembly and neuronal surface expression of BK channels via its interaction with KCNT1. May also be involved in regulating anxiety-like behaviors via a BK channel-independent mechanism. Plays a negative role in TLR4 signaling by interacting with TRAF6 and ECSIT, leading to inhibition of ECSIT ubiquitination, an important step of the signaling. The polypeptide is Protein cereblon (CRBN) (Bos taurus (Bovine)).